The primary structure comprises 177 residues: SsrA-binding protein (177 aa).

Disordered regions lie at residues 1–23 (MYVPKESQPKQGGGASGKVKDGK) and 148–177 (YDKRQTLREKQDRRESDRAIAAAKRKQRGE). Over residues 148 to 165 (YDKRQTLREKQDRRESDR) the composition is skewed to basic and acidic residues.

The protein belongs to the SmpB family.

Its subcellular location is the cytoplasm. Required for rescue of stalled ribosomes mediated by trans-translation. Binds to transfer-messenger RNA (tmRNA), required for stable association of tmRNA with ribosomes. tmRNA and SmpB together mimic tRNA shape, replacing the anticodon stem-loop with SmpB. tmRNA is encoded by the ssrA gene; the 2 termini fold to resemble tRNA(Ala) and it encodes a 'tag peptide', a short internal open reading frame. During trans-translation Ala-aminoacylated tmRNA acts like a tRNA, entering the A-site of stalled ribosomes, displacing the stalled mRNA. The ribosome then switches to translate the ORF on the tmRNA; the nascent peptide is terminated with the 'tag peptide' encoded by the tmRNA and targeted for degradation. The ribosome is freed to recommence translation, which seems to be the essential function of trans-translation. In Streptomyces avermitilis (strain ATCC 31267 / DSM 46492 / JCM 5070 / NBRC 14893 / NCIMB 12804 / NRRL 8165 / MA-4680), this protein is SsrA-binding protein.